Reading from the N-terminus, the 600-residue chain is MMDGFAQDWPTLTHTDNGLAMDQLGVGVGVGDLPIDAGFEPQTRARSNTWPCPRPDNFVEPVDELDSTKASNQQLAPGDSQQAIQNANAAKKNSSRRNAWGNLSYADLITHAIGSATDKRLTLSQIYEWMVQNVPYFKDKGDSNSSAGWKNSIRHNLSLHNRFMRVQNEGTGKSSWWMLNPEAKPGKSVRRRAASMETSRYEKRRGRAKKRVEALRQAGVVGLNDATPSPSSSVSEGLDHFPESPLHSGGGFQLSPDFRQRASSNASSCGRLSPIRAQDLEPDWGFPGVDYQNTTMTQALEELTGSMADELTLCTQQQQQGFSAASGLPTQPPPPPYQPPQPQQQQQQGQQPSPYALNGPTPGYNTLQPQSQCLLHRSLNCSCLHNARDGLSPNSVTTTMSPAYPNSEPSSDSLNTYSNVVLDGPADTAALLVQQQQQLATNLEGQCLEVLNSEAQPIDEFNLENFPVGNLECNVEELLQQEMSYGGLLDINIPLASVNTNLVNSGAPISNITTSTGTSLNLNQLQAQLHQQQQQQQQLQQQQQQQQHQQHQQQQLLLNNNNNTSSSSLELATQTPSTNLNARVQYSQPSVVTSPPSWVH.

At threonine 49 the chain carries Phosphothreonine; by PKB/AKT1. Residue serine 80 is modified to Phosphoserine. Residues 100–206 (WGNLSYADLI…ETSRYEKRRG (107 aa)) constitute a DNA-binding region (fork-head). Disordered stretches follow at residues 187 to 210 (KSVR…RAKK), 222 to 283 (GLND…LEPD), 319 to 364 (QQGF…TPGY), and 580 to 600 (LNAR…SWVH). Residue serine 195 is modified to Phosphoserine; by PKB/AKT1. 2 stretches are compositionally biased toward polar residues: residues 226–235 (ATPSPSSSVS) and 261–270 (RASSNASSCG). At serine 264 the chain carries Phosphoserine; by PKB/AKT1. Residues serine 267, serine 268, and serine 273 each carry the phosphoserine modification. Pro residues predominate over residues 330–342 (TQPPPPPYQPPQP). Low complexity predominate over residues 343–354 (QQQQQQGQQPSP).

As to quaternary structure, interacts with melt.

It localises to the cytoplasm. The protein localises to the nucleus. In terms of biological role, transcription factor involved in the regulation of the insulin signaling pathway. Consistently activates both the downstream target Thor\d4EBP and the feedback control target InR. Involved in negative regulation of the cell cycle, modulating cell growth and proliferation. In response to cellular stresses, such as nutrient deprivation or increased levels of reactive oxygen species, foxo is activated and inhibits growth through the action of target genes such as Thor. Foxo activated in the adult fat body can regulate lifespan in adults; an insulin peptide itself may function as one secondary messenger of insulin-regulated aging. Also regulates Lip4, homolog of human acid lipases, thereby acting as a key modulator of lipid metabolism by insulin signaling and integrates insulin responses to glucose and lipid homeostasis. In Drosophila ananassae (Fruit fly), this protein is Forkhead box protein O.